A 111-amino-acid chain; its full sequence is Fluoride-specific ion channel FluC 3 (111 aa).

Transmembrane regions (helical) follow at residues 26-46, 53-73, and 91-111; these read IPAGTLTVNLLGSIVLALLTF, VVYLVNIGMLGSFTTFSTFAY, and IFLNVMLCLLGVSIAYLALML. Na(+) contacts are provided by glycine 63 and threonine 66.

Belongs to the fluoride channel Fluc/FEX (TC 1.A.43) family.

The protein localises to the cell membrane. It catalyses the reaction fluoride(in) = fluoride(out). Its activity is regulated as follows. Na(+) is not transported, but it plays an essential structural role and its presence is essential for fluoride channel function. In terms of biological role, fluoride-specific ion channel. Important for reducing fluoride concentration in the cell, thus reducing its toxicity. In Methanosarcina acetivorans (strain ATCC 35395 / DSM 2834 / JCM 12185 / C2A), this protein is Fluoride-specific ion channel FluC 3.